The chain runs to 159 residues: SsrA-binding protein (159 aa).

Residues 131–159 form a disordered region; the sequence is KGKKLHDKRESEKERDWNRQKSRLLKDNG. A compositionally biased stretch (basic and acidic residues) spans 137-159; sequence DKRESEKERDWNRQKSRLLKDNG.

It belongs to the SmpB family.

It localises to the cytoplasm. In terms of biological role, required for rescue of stalled ribosomes mediated by trans-translation. Binds to transfer-messenger RNA (tmRNA), required for stable association of tmRNA with ribosomes. tmRNA and SmpB together mimic tRNA shape, replacing the anticodon stem-loop with SmpB. tmRNA is encoded by the ssrA gene; the 2 termini fold to resemble tRNA(Ala) and it encodes a 'tag peptide', a short internal open reading frame. During trans-translation Ala-aminoacylated tmRNA acts like a tRNA, entering the A-site of stalled ribosomes, displacing the stalled mRNA. The ribosome then switches to translate the ORF on the tmRNA; the nascent peptide is terminated with the 'tag peptide' encoded by the tmRNA and targeted for degradation. The ribosome is freed to recommence translation, which seems to be the essential function of trans-translation. The protein is SsrA-binding protein of Rhizobium leguminosarum bv. trifolii (strain WSM2304).